The following is a 158-amino-acid chain: Snaclec agglucetin subunit alpha-2 (158 aa).

Positions 1 to 23 are cleaved as a signal peptide; it reads MGRFIFVSFGLLVVFLSLSGTGA. 3 cysteine pairs are disulfide-bonded: Cys27–Cys38, Cys55–Cys152, and Cys127–Cys144. A C-type lectin domain is found at 34–153; it reads YDQYCYQVIK…CIQLNPFVCK (120 aa).

Belongs to the snaclec family. As to quaternary structure, heterotetramer of the subunits alpha-1, alpha-2, beta-1 and beta-2; disulfide-linked. As to expression, expressed by the venom gland.

The protein resides in the secreted. Agglucetin specifically causes platelet aggregation and surface exposure of integrin alpha-IIb/beta-3 with a GPIb-(GP1BA-) dependent manner in washed platelets. It binds to human platelets in a saturable manner, and its binding is specifically blocked by anti-GP Ib mAb. It regulates endothelial cell survival and promotes angiogenesis by activating integrin alpha-v/beta-3 signaling through FAK/phosphatidylinositol 3-kinase (PI3K)/Akt pathway. The sequence is that of Snaclec agglucetin subunit alpha-2 from Deinagkistrodon acutus (Hundred-pace snake).